The primary structure comprises 306 residues: Leucine-rich repeat-containing protein 75B (306 aa).

Residues 1-22 (MGARLGRRARADAPAAPSAGPA) are disordered. Residues 12–22 (DAPAAPSAGPA) are compositionally biased toward low complexity. LRR repeat units follow at residues 173 to 186 (LVVLDLSFTELSDE) and 198 to 211 (LPRLTQLLLNGNRL).

Belongs to the LRRC75 family.

May suppress myogenic differentiation by modulating MYOG expression and Erk1/2 signaling. The protein is Leucine-rich repeat-containing protein 75B of Mus musculus (Mouse).